Here is a 217-residue protein sequence, read N- to C-terminus: Adenylate kinase (217 aa).

ATP is bound at residue 11 to 16 (GAGKGT). The tract at residues 31-60 (STGDMFREAMANETPVGLEAKSYIDKGNLV) is NMP. AMP contacts are provided by residues Thr32, Arg37, 58-60 (NLV), 86-89 (GFPR), and Gln93. Positions 127-165 (ARYICKKCGATYNKISNPTKVEGTCDRCGGHEFFQREDD) are LID. An ATP-binding site is contributed by Arg128. Zn(2+)-binding residues include Cys131 and Cys134. 137–138 (TY) is an ATP binding site. Zn(2+) contacts are provided by Cys151 and Cys154. Positions 162 and 173 each coordinate AMP. Gln201 lines the ATP pocket.

It belongs to the adenylate kinase family. Monomer.

The protein localises to the cytoplasm. The enzyme catalyses AMP + ATP = 2 ADP. The protein operates within purine metabolism; AMP biosynthesis via salvage pathway; AMP from ADP: step 1/1. Catalyzes the reversible transfer of the terminal phosphate group between ATP and AMP. Plays an important role in cellular energy homeostasis and in adenine nucleotide metabolism. The sequence is that of Adenylate kinase from Lactobacillus johnsonii (strain CNCM I-12250 / La1 / NCC 533).